The chain runs to 324 residues: Methenyltetrahydromethanopterin cyclohydrolase (324 aa).

The protein belongs to the MCH family.

It localises to the cytoplasm. The enzyme catalyses 5,10-methenyl-5,6,7,8-tetrahydromethanopterin + H2O = N(5)-formyl-5,6,7,8-tetrahydromethanopterin + H(+). The protein operates within one-carbon metabolism; formaldehyde degradation; formate from formaldehyde (H(4)MPT route): step 3/5. Its function is as follows. Catalyzes the hydrolysis of methenyl-H(4)MPT(+) to 5-formyl-H(4)MPT. This Methylobacterium nodulans (strain LMG 21967 / CNCM I-2342 / ORS 2060) protein is Methenyltetrahydromethanopterin cyclohydrolase.